Consider the following 213-residue polypeptide: Probable transaldolase (213 aa).

The active-site Schiff-base intermediate with substrate is the lysine 83.

The protein belongs to the transaldolase family. Type 3B subfamily.

Its subcellular location is the cytoplasm. The enzyme catalyses D-sedoheptulose 7-phosphate + D-glyceraldehyde 3-phosphate = D-erythrose 4-phosphate + beta-D-fructose 6-phosphate. It participates in carbohydrate degradation; pentose phosphate pathway; D-glyceraldehyde 3-phosphate and beta-D-fructose 6-phosphate from D-ribose 5-phosphate and D-xylulose 5-phosphate (non-oxidative stage): step 2/3. Functionally, transaldolase is important for the balance of metabolites in the pentose-phosphate pathway. In Geobacillus sp. (strain WCH70), this protein is Probable transaldolase.